The primary structure comprises 299 residues: Rhodanese-like/PpiC domain-containing protein 12, chloroplastic (299 aa).

The transit peptide at Met1–Ala81 directs the protein to the chloroplast. Residue Ser82 is modified to N-acetylserine. Residues Ser93–Ser183 enclose the PpiC domain. The Rhodanese domain maps to Phe205–Pro297. The Cysteine persulfide intermediate role is filled by Cys257.

It localises to the plastid. The protein resides in the chloroplast. In Arabidopsis thaliana (Mouse-ear cress), this protein is Rhodanese-like/PpiC domain-containing protein 12, chloroplastic.